A 320-amino-acid polypeptide reads, in one-letter code: MQTRNAFSCIKEGITRSISISIMIYIIIRAPISNAYPIFAQQGYENPREATGRIVCANCHLANKPVDIEVPQAVLPDTVFEAVVRIPYDMQVKQVLANGKKGALNVGAVLILPEGFELAPPDRISPEIKEKIGNLSFQNYRPTKKNILVVGPVPGQKYKEITFPILSPDPTTKRDVHFLKYPIYVGGNRGRGQIYLDGSKSNNNVYNATAAGMVKKIIRKEKGGYEITIVDALDGREVIDIIPPGPELLVSEGESIKLDQPLTSNPNVGGFGQGDAEIVLQDPLRVQGLLFFFASIILAQIFLVLKKKQFEKVQLSEMNF.

A signal peptide spans 1–35 (MQTRNAFSCIKEGITRSISISIMIYIIIRAPISNA). Heme contacts are provided by Y36, C56, C59, and H60. The chain crosses the membrane as a helical span at residues 286–305 (VQGLLFFFASIILAQIFLVL).

The protein belongs to the cytochrome f family. As to quaternary structure, the 4 large subunits of the cytochrome b6-f complex are cytochrome b6, subunit IV (17 kDa polypeptide, petD), cytochrome f and the Rieske protein, while the 4 small subunits are PetG, PetL, PetM and PetN. The complex functions as a dimer. The cofactor is heme.

Its subcellular location is the plastid. It localises to the chloroplast thylakoid membrane. Functionally, component of the cytochrome b6-f complex, which mediates electron transfer between photosystem II (PSII) and photosystem I (PSI), cyclic electron flow around PSI, and state transitions. The polypeptide is Cytochrome f (petA) (Glycine max (Soybean)).